We begin with the raw amino-acid sequence, 77 residues long: Secapin (77 aa).

The signal sequence occupies residues 1–32 (MKNYSKNATYLITVLLFSFVAMLLIIPSKCEA). The propeptide occupies 33-52 (VSNDMQPLEARTADLVQQPR). Cysteine 61 and cysteine 72 are joined by a disulfide.

It belongs to the secapin family. In terms of tissue distribution, expressed by the venom gland.

The protein localises to the secreted. Functionally, nontoxic peptide. The polypeptide is Secapin (Apis cerana cerana (Oriental honeybee)).